A 178-amino-acid chain; its full sequence is MSRVGKKIIDIPSDVTVSVEGNTITVKGPKGELSRTMNERMTYKQDESTLEVVRPTDSKDDRTVHGTTRALINNMIQGVKEGYQKTLELVGVGYRAQMQGNDLILNVGYSHPVEIKADDGITFGVEKNTTVTVAGISKEQVGAIASNIRSVRPPEPYKGKGIRYQGEYVRRKEGKTGK.

It belongs to the universal ribosomal protein uL6 family. Part of the 50S ribosomal subunit.

Its function is as follows. This protein binds to the 23S rRNA, and is important in its secondary structure. It is located near the subunit interface in the base of the L7/L12 stalk, and near the tRNA binding site of the peptidyltransferase center. The sequence is that of Large ribosomal subunit protein uL6 from Staphylococcus saprophyticus subsp. saprophyticus (strain ATCC 15305 / DSM 20229 / NCIMB 8711 / NCTC 7292 / S-41).